The following is a 314-amino-acid chain: Ketimine reductase mu-crystallin (314 aa).

Position 47 (arginine 47) interacts with 3,3',5-triiodo-L-thyronine. NADPH-binding residues include serine 91, histidine 92, arginine 119, alanine 144, valine 146, glutamine 147, asparagine 168, arginine 169, threonine 170, asparagine 173, threonine 205, and methionine 206. Position 257 (glutamate 257) interacts with 3,3',5-triiodo-L-thyronine. Serine 292 serves as a coordination point for NADPH.

It belongs to the ornithine cyclodeaminase/mu-crystallin family. As to quaternary structure, homodimer. Binds the thyroid hormone triiodothyronine (T3); T3 binding inhibits enzymatic activity.

The protein resides in the cytoplasm. The catalysed reaction is L-pipecolate + NAD(+) = Delta(1)-piperideine-2-carboxylate + NADH + H(+). It carries out the reaction L-pipecolate + NADP(+) = Delta(1)-piperideine-2-carboxylate + NADPH + H(+). The enzyme catalyses L-proline + NADP(+) = 1-pyrroline-2-carboxylate + NADPH + H(+). It catalyses the reaction L-proline + NAD(+) = 1-pyrroline-2-carboxylate + NADH + H(+). The catalysed reaction is (3R)-1,4-thiomorpholine-3-carboxylate + NAD(+) = 3,4-dehydrothiomorpholine-3-carboxylate + NADH + 2 H(+). It carries out the reaction (3R)-1,4-thiomorpholine-3-carboxylate + NADP(+) = 3,4-dehydrothiomorpholine-3-carboxylate + NADPH + 2 H(+). The enzyme catalyses (S)-cystathionine ketimine + NADH + 2 H(+) = (3R,5S)-2,3,5,6,7-pentahydro-1,4-thiazepine-3,5-dicarboxylate + NAD(+). It catalyses the reaction (S)-cystathionine ketimine + NADPH + 2 H(+) = (3R,5S)-2,3,5,6,7-pentahydro-1,4-thiazepine-3,5-dicarboxylate + NADP(+). The catalysed reaction is (R)-lanthionine ketimine + NADPH + 2 H(+) = (3R,5R)-1,4-thiomorpholine-3,5-dicarboxylate + NADP(+). It carries out the reaction Delta(2)-thiazoline-2-carboxylate + NADPH + 2 H(+) = L-thiazolidine-2-carboxylate + NADP(+). Catalyzes the NAD(P)H-dependent reduction of imine double bonds of a number of cyclic ketimine substrates, including sulfur-containing cyclic ketimines. Under physiological conditions, it efficiently catalyzes delta(1)-piperideine-2-carboxylate (P2C) and delta(1)-pyrroline-2-carboxylate (Pyr2C) reduction, suggesting a central role in lysine and glutamate metabolism. Additional substrates are (S)-cystathionine ketimine (CysK), 3,4-dehydrothiomorpholine-3-carboxylate (AECK), and (R)-lanthionine ketimine (LK) that is reduced at very low rate compared to other substrates. Also catalyzes the NAD(P)H-dependent reduction of delta(2)-thiazoline-2-carboxylate (T2C). The protein is Ketimine reductase mu-crystallin (CRYM) of Bos taurus (Bovine).